The following is a 117-amino-acid chain: Probable non-functional immunoglobulinn kappa variable 1-37 (117 aa).

An N-terminal signal peptide occupies residues 1–22 (MDMRVPAQLLGLLLLWVPGARC). The 94-residue stretch at 24-117 (IQLTQSPSSL…YYGQRTYNAP (94 aa)) folds into the Ig-like domain.

In terms of assembly, most probably, the immunoglobulin is not assembled due to incorrect folding of light chain. Immunoglobulins are composed of two identical heavy chains and two identical light chains; disulfide-linked.

It is found in the secreted. The protein localises to the cell membrane. Probable non-functional open reading frame (ORF) of V region of the variable domain of immunoglobulin light chains. Non-functional ORF generally cannot participate in the synthesis of a productive immunoglobulin chain due to altered V-(D)-J or switch recombination and/or splicing site (at mRNA level) and/or conserved amino acid change (protein level). Immunoglobulins, also known as antibodies, are membrane-bound or secreted glycoproteins produced by B lymphocytes. In the recognition phase of humoral immunity, the membrane-bound immunoglobulins serve as receptors which, upon binding of a specific antigen, trigger the clonal expansion and differentiation of B lymphocytes into immunoglobulins-secreting plasma cells. Secreted immunoglobulins mediate the effector phase of humoral immunity, which results in the elimination of bound antigens. The antigen binding site is formed by the variable domain of one heavy chain, together with that of its associated light chain. Thus, each immunoglobulin has two antigen binding sites with remarkable affinity for a particular antigen. The variable domains are assembled by a process called V-(D)-J rearrangement and can then be subjected to somatic hypermutations which, after exposure to antigen and selection, allow affinity maturation for a particular antigen. The sequence is that of Probable non-functional immunoglobulinn kappa variable 1-37 from Homo sapiens (Human).